Reading from the N-terminus, the 209-residue chain is Protein GrpE (209 aa).

It belongs to the GrpE family. As to quaternary structure, homodimer.

Its subcellular location is the cytoplasm. Participates actively in the response to hyperosmotic and heat shock by preventing the aggregation of stress-denatured proteins, in association with DnaK and GrpE. It is the nucleotide exchange factor for DnaK and may function as a thermosensor. Unfolded proteins bind initially to DnaJ; upon interaction with the DnaJ-bound protein, DnaK hydrolyzes its bound ATP, resulting in the formation of a stable complex. GrpE releases ADP from DnaK; ATP binding to DnaK triggers the release of the substrate protein, thus completing the reaction cycle. Several rounds of ATP-dependent interactions between DnaJ, DnaK and GrpE are required for fully efficient folding. In Colwellia psychrerythraea (strain 34H / ATCC BAA-681) (Vibrio psychroerythus), this protein is Protein GrpE.